The primary structure comprises 371 residues: MAPPNTKESQLPGEQPTALCKRCNEVQATLQIRSESVCQKCFLQYIKTKAVKRMETYKGKRSTKVPQKLLLPLSFGPSSSCLLHMLDGYLGIQHERMNRVSYELFVVHIDLYLDDADREASAARLQKYKDQYPRHSYSSYGLHEALQLEGIDWQSLGISDLPTQDTKASSFDLQKIVSSLSSATSRADIVSTLLNRLLVDVAKRNDCESILFGDTTTRLAEKTLTETAKGRGFSLPWQVSDGPSPYGIGFLYPLRDILKKEIMTFSTSFSPLPELVVHQAPPSHISASSKSTTIDDLMAQYFESVEENFPSIVANVAVEFAGFLSQRALMASMVGVEIKIQIHGHQEKTLIQILFYAMDAQDLSTDESARP.

Belongs to the CTU2/NCS2 family.

The protein localises to the cytoplasm. Its pathway is tRNA modification; 5-methoxycarbonylmethyl-2-thiouridine-tRNA biosynthesis. Its function is as follows. Plays a central role in 2-thiolation of mcm(5)S(2)U at tRNA wobble positions of tRNA(Lys), tRNA(Glu) and tRNA(Gln). May act by forming a heterodimer with ncs6 that ligates sulfur from thiocarboxylated urm1 onto the uridine of tRNAs at wobble position. Prior mcm(5) tRNA modification by the elongator complex is required for 2-thiolation. May also be involved in protein urmylation. The protein is Cytoplasmic tRNA 2-thiolation protein 2 (ncs2) of Sclerotinia sclerotiorum (strain ATCC 18683 / 1980 / Ss-1) (White mold).